Here is a 68-residue protein sequence, read N- to C-terminus: Protein SrnB (68 aa).

The helical transmembrane segment at 23 to 42 (YALIGLLAVCATVLCFSLIF) threads the bilayer.

This sequence belongs to the Hok/Gef family.

The protein localises to the cell inner membrane. Toxic component of a type I toxin-antitoxin (TA) system. Its normal function is believed to be effective plasmid stabilization through postsegregational killing of cells that have lost the F plasmid. Promotes degradation of stable RNA in E.coli. The sequence is that of Protein SrnB (srnB) from Escherichia coli (strain K12).